The primary structure comprises 276 residues: Undecaprenyl-diphosphatase (276 aa).

The next 8 helical transmembrane spans lie at 1-21, 39-59, 84-104, 115-135, 159-179, 190-210, 222-242, and 253-273; these read MSWLQVIVLAVVQGLTEFLPV, AGASFTAVTQLGTEVAVLVYF, YRLGWYVIIGTIPIGVIGLLL, LWAIAIALIVFSAVIAAAEYF, LALLPGVSRSGATISAGLFLG, FLLAIPAVFASGLFSLPDAFA, QLLVATVIAFVVGFAAVAWFL, and FVGYRVVLGVVVLILLSTGVV.

It belongs to the UppP family.

Its subcellular location is the cell membrane. It carries out the reaction di-trans,octa-cis-undecaprenyl diphosphate + H2O = di-trans,octa-cis-undecaprenyl phosphate + phosphate + H(+). Functionally, catalyzes the dephosphorylation of undecaprenyl diphosphate (UPP). Confers resistance to bacitracin. This chain is Undecaprenyl-diphosphatase, found in Mycobacterium sp. (strain KMS).